The sequence spans 158 residues: Protein-export protein SecB (158 aa).

This sequence belongs to the SecB family. As to quaternary structure, homotetramer, a dimer of dimers. One homotetramer interacts with 1 SecA dimer.

The protein resides in the cytoplasm. One of the proteins required for the normal export of preproteins out of the cell cytoplasm. It is a molecular chaperone that binds to a subset of precursor proteins, maintaining them in a translocation-competent state. It also specifically binds to its receptor SecA. This chain is Protein-export protein SecB, found in Anaplasma phagocytophilum (strain HZ).